The sequence spans 386 residues: Ribosomal RNA small subunit methyltransferase H (386 aa).

Residues 97–99, aspartate 116, tyrosine 143, aspartate 167, and glutamine 174 each bind S-adenosyl-L-methionine; that span reads GGH.

It belongs to the methyltransferase superfamily. RsmH family.

The protein localises to the cytoplasm. It catalyses the reaction cytidine(1402) in 16S rRNA + S-adenosyl-L-methionine = N(4)-methylcytidine(1402) in 16S rRNA + S-adenosyl-L-homocysteine + H(+). Specifically methylates the N4 position of cytidine in position 1402 (C1402) of 16S rRNA. The protein is Ribosomal RNA small subunit methyltransferase H of Mycobacterium avium (strain 104).